Reading from the N-terminus, the 276-residue chain is 2-dehydro-3-deoxyphosphooctonate aldolase (276 aa).

This sequence belongs to the KdsA family.

It localises to the cytoplasm. The enzyme catalyses D-arabinose 5-phosphate + phosphoenolpyruvate + H2O = 3-deoxy-alpha-D-manno-2-octulosonate-8-phosphate + phosphate. The protein operates within carbohydrate biosynthesis; 3-deoxy-D-manno-octulosonate biosynthesis; 3-deoxy-D-manno-octulosonate from D-ribulose 5-phosphate: step 2/3. It functions in the pathway bacterial outer membrane biogenesis; lipopolysaccharide biosynthesis. In Helicobacter pylori (strain Shi470), this protein is 2-dehydro-3-deoxyphosphooctonate aldolase.